The primary structure comprises 446 residues: Anthranilate N-benzoyltransferase protein 2 (446 aa).

Active-site proton acceptor residues include His-164 and Asp-393.

Belongs to the plant acyltransferase family. In terms of processing, N-terminus is blocked.

It carries out the reaction anthranilate + benzoyl-CoA = N-benzoylanthranilate + CoA. Its pathway is phytoalexin biosynthesis; methoxydianthramide B biosynthesis. Catalyzes the formation of N-benzoylanthranilate, in the course of methoxydianthramide B, a phytoalexin. Phytoalexins are produced in response to infection by parasites, and are essential for the expression of disease resistance. The chain is Anthranilate N-benzoyltransferase protein 2 (HCBT2) from Dianthus caryophyllus (Carnation).